A 446-amino-acid chain; its full sequence is MSMTPREIVHELNRHIIGQDDAKRAVAIALRNRWRRMQLPAELRVEVTPKNILMIGPTGVGKTEIARRLAKLANAPFIKVEATKFTEVGYVGRDVESIIRDLADAAIKMFREQEMIRVRHRAEDAAEERILDALLPQARTGFNSDDAAPAQDSNTRQLFRKRLREGQLDDKEIEIEVAEAAGVDISAPPGMEEMTNQLQSLFANMGKGKRKNRKLKVKEALKLVRDEEASRLVNDEELKAKALEAVEQHGIVFIDEIDKVAKRGNAGGVDVSREGVQRDLLPLIEGCTVNTKLGMVKTDHILFIASGAFHLSKPSDLVPELQGRLPIRVELKALSPQDFERILSEPHASLTEQYRELLKTEGLNIEFLPEGIKRLAEIAWQVNEKTENIGARRLHTLLERLLEEVSFSAGDLASAHSEEPIRIDAAYVNSHLGELAQNEDLSRYIL.

ATP is bound by residues Ile-17, 59–64 (GVGKTE), Asp-255, Glu-320, and Arg-392.

Belongs to the ClpX chaperone family. HslU subfamily. In terms of assembly, a double ring-shaped homohexamer of HslV is capped on each side by a ring-shaped HslU homohexamer. The assembly of the HslU/HslV complex is dependent on binding of ATP.

Its subcellular location is the cytoplasm. In terms of biological role, ATPase subunit of a proteasome-like degradation complex; this subunit has chaperone activity. The binding of ATP and its subsequent hydrolysis by HslU are essential for unfolding of protein substrates subsequently hydrolyzed by HslV. HslU recognizes the N-terminal part of its protein substrates and unfolds these before they are guided to HslV for hydrolysis. The polypeptide is ATP-dependent protease ATPase subunit HslU (Pseudomonas fluorescens (strain ATCC BAA-477 / NRRL B-23932 / Pf-5)).